Here is a 102-residue protein sequence, read N- to C-terminus: Large ribosomal subunit protein uL24 (102 aa).

It belongs to the universal ribosomal protein uL24 family. Part of the 50S ribosomal subunit.

In terms of biological role, one of two assembly initiator proteins, it binds directly to the 5'-end of the 23S rRNA, where it nucleates assembly of the 50S subunit. Its function is as follows. One of the proteins that surrounds the polypeptide exit tunnel on the outside of the subunit. The polypeptide is Large ribosomal subunit protein uL24 (Leuconostoc mesenteroides subsp. mesenteroides (strain ATCC 8293 / DSM 20343 / BCRC 11652 / CCM 1803 / JCM 6124 / NCDO 523 / NBRC 100496 / NCIMB 8023 / NCTC 12954 / NRRL B-1118 / 37Y)).